A 140-amino-acid polypeptide reads, in one-letter code: NADH-quinone oxidoreductase subunit I (140 aa).

4Fe-4S ferredoxin-type domains lie at 42-71 and 81-110; these read GSFTLHSEKCIACGLCQQACPNKVIKVGSI and ASYEMEMKYCLFCGLCVEACPTNALVFNQE. Cys51, Cys54, Cys57, Cys61, Cys90, Cys93, Cys96, and Cys100 together coordinate [4Fe-4S] cluster.

Belongs to the complex I 23 kDa subunit family. In terms of assembly, NDH-1 is composed of 14 different subunits. Subunits NuoA, H, J, K, L, M, N constitute the membrane sector of the complex. It depends on [4Fe-4S] cluster as a cofactor.

It is found in the cell membrane. The catalysed reaction is a quinone + NADH + 5 H(+)(in) = a quinol + NAD(+) + 4 H(+)(out). Its function is as follows. NDH-1 shuttles electrons from NADH, via FMN and iron-sulfur (Fe-S) centers, to quinones in the respiratory chain. The immediate electron acceptor for the enzyme in this species is believed to be ubiquinone. Couples the redox reaction to proton translocation (for every two electrons transferred, four hydrogen ions are translocated across the cytoplasmic membrane), and thus conserves the redox energy in a proton gradient. This chain is NADH-quinone oxidoreductase subunit I, found in Carboxydothermus hydrogenoformans (strain ATCC BAA-161 / DSM 6008 / Z-2901).